Here is a 476-residue protein sequence, read N- to C-terminus: Methylenetetrahydrofolate--tRNA-(uracil-5-)-methyltransferase TrmFO (476 aa).

Position 14 to 19 (14 to 19 (GGGLAG)) interacts with FAD.

Belongs to the MnmG family. TrmFO subfamily. Requires FAD as cofactor.

It is found in the cytoplasm. The catalysed reaction is uridine(54) in tRNA + (6R)-5,10-methylene-5,6,7,8-tetrahydrofolate + NADH + H(+) = 5-methyluridine(54) in tRNA + (6S)-5,6,7,8-tetrahydrofolate + NAD(+). The enzyme catalyses uridine(54) in tRNA + (6R)-5,10-methylene-5,6,7,8-tetrahydrofolate + NADPH + H(+) = 5-methyluridine(54) in tRNA + (6S)-5,6,7,8-tetrahydrofolate + NADP(+). Functionally, catalyzes the folate-dependent formation of 5-methyl-uridine at position 54 (M-5-U54) in all tRNAs. The protein is Methylenetetrahydrofolate--tRNA-(uracil-5-)-methyltransferase TrmFO of Brucella anthropi (strain ATCC 49188 / DSM 6882 / CCUG 24695 / JCM 21032 / LMG 3331 / NBRC 15819 / NCTC 12168 / Alc 37) (Ochrobactrum anthropi).